A 368-amino-acid polypeptide reads, in one-letter code: Probable ubiquitin receptor RAD23a (368 aa).

The Ubiquitin-like domain occupies 1 to 77; the sequence is MKLTVKTLKG…GFLVVMLSKS (77 aa). The span at 80–111 shows a compositional bias: low complexity; sequence ASSAGPSSTQPTSTTTSTISSTTLAAPSTTQS. Residues 80–136 form a disordered region; the sequence is ASSAGPSSTQPTSTTTSTISSTTLAAPSTTQSIAVPASNSTPVQEQPTAQSDTYGQA. The span at 116-136 shows a compositional bias: polar residues; it reads ASNSTPVQEQPTAQSDTYGQA. The UBA 1 domain occupies 142 to 185; that stretch reads SGSSIEQMVQQIMEMGGGSWDKETVTRALRAAYNNPERAVDYLY. The segment at 202 to 222 is disordered; it reads VGSGRELTAPPPSGGPNSSPL. In terms of domain architecture, STI1 spans 239–282; sequence GTLEFLRGNDQFQQLRSMVNSNPQILQPMLQELGKQNPQLLRLI. The UBA 2 domain occupies 320–360; it reads VTPEEQESIERLEAMGFDRAIVIEAFLSCDRNEELAANYLL.

The protein belongs to the RAD23 family. In terms of assembly, interacts with 'Lys-48'-linked polyubiquitin chains. Interacts with RPN10. Widely expressed in the whole plant.

It is found in the nucleus. The protein localises to the cytoplasm. Functionally, may be involved in nucleotide excision repair. Binds and presumably selects ubiquitin-conjugates for destruction. Prefers multiubiquitin chains rather than single ubiquitins, with a binding affinity for 'Lys-48'-linked ubiquitin chains. Acts as a ubiquitin receptor that associates with the 26S proteasomal docking subunit RPN10 for the indirect recognition of ubiquitinated substrates of ubiquitin/26S proteasome-mediated proteolysis (UPP). Involved in UV tolerance in roots, specifically in dark conditions. The sequence is that of Probable ubiquitin receptor RAD23a from Arabidopsis thaliana (Mouse-ear cress).